A 75-amino-acid polypeptide reads, in one-letter code: Putative sulfur carrier protein TsuB (75 aa).

Residue C13 is the Cysteine persulfide intermediate of the active site.

It belongs to the sulfur carrier protein TusA family.

Involved in thiosulfate metabolism. This chain is Putative sulfur carrier protein TsuB, found in Escherichia coli (strain K12).